Reading from the N-terminus, the 602-residue chain is Elongation factor 4 (602 aa).

Residues 7 to 189 (KHIRNFSIVA…AIVDKIPSPQ (183 aa)) form the tr-type G domain. GTP is bound by residues 19 to 24 (DHGKST) and 136 to 139 (NKID).

This sequence belongs to the TRAFAC class translation factor GTPase superfamily. Classic translation factor GTPase family. LepA subfamily.

Its subcellular location is the cell membrane. It carries out the reaction GTP + H2O = GDP + phosphate + H(+). Functionally, required for accurate and efficient protein synthesis under certain stress conditions. May act as a fidelity factor of the translation reaction, by catalyzing a one-codon backward translocation of tRNAs on improperly translocated ribosomes. Back-translocation proceeds from a post-translocation (POST) complex to a pre-translocation (PRE) complex, thus giving elongation factor G a second chance to translocate the tRNAs correctly. Binds to ribosomes in a GTP-dependent manner. This is Elongation factor 4 from Clostridium kluyveri (strain ATCC 8527 / DSM 555 / NBRC 12016 / NCIMB 10680 / K1).